The primary structure comprises 167 residues: Large ribosomal subunit protein uL23 (167 aa).

The tract at residues 1–130 is large ribosomal subunit protein uL23; it reads MNVNEIIKGP…ELEAKNKEIA (130 aa). Disordered regions lie at residues 91–112 and 137–167; these read FEDESPQDQKDSETISENTDEK and QAELAKKESETNENQEKKIENQTENQENSAK. 2 stretches are compositionally biased toward basic and acidic residues: residues 97–112 and 137–157; these read QDQKDSETISENTDEK and QAELAKKESETNENQEKKIEN. The unknown stretch occupies residues 131–167; that stretch reads EKLAKKQAELAKKESETNENQEKKIENQTENQENSAK. Over residues 158 to 167 the composition is skewed to polar residues; it reads QTENQENSAK.

Belongs to the universal ribosomal protein uL23 family. Part of the 50S ribosomal subunit. Contacts protein L29, and trigger factor when it is bound to the ribosome.

Its function is as follows. One of the early assembly proteins it binds 23S rRNA. One of the proteins that surrounds the polypeptide exit tunnel on the outside of the ribosome. Forms the main docking site for trigger factor binding to the ribosome. This chain is Large ribosomal subunit protein uL23, found in Mesomycoplasma hyopneumoniae (strain 7448) (Mycoplasma hyopneumoniae).